Reading from the N-terminus, the 288-residue chain is Elongation factor Ts (288 aa).

Residues 79-82 (TDFV) are involved in Mg(2+) ion dislocation from EF-Tu.

This sequence belongs to the EF-Ts family.

It localises to the cytoplasm. Its function is as follows. Associates with the EF-Tu.GDP complex and induces the exchange of GDP to GTP. It remains bound to the aminoacyl-tRNA.EF-Tu.GTP complex up to the GTP hydrolysis stage on the ribosome. This chain is Elongation factor Ts, found in Ehrlichia chaffeensis (strain ATCC CRL-10679 / Arkansas).